Reading from the N-terminus, the 470-residue chain is Protein nucleotidyltransferase YdiU (470 aa).

Residues G86, G88, R89, K109, D121, G122, R172, and R179 each contribute to the ATP site. D244 serves as the catalytic Proton acceptor. Residues N245 and D254 each contribute to the Mg(2+) site. D254 contributes to the ATP binding site.

This sequence belongs to the SELO family. Mg(2+) serves as cofactor. It depends on Mn(2+) as a cofactor.

The enzyme catalyses L-seryl-[protein] + ATP = 3-O-(5'-adenylyl)-L-seryl-[protein] + diphosphate. The catalysed reaction is L-threonyl-[protein] + ATP = 3-O-(5'-adenylyl)-L-threonyl-[protein] + diphosphate. It catalyses the reaction L-tyrosyl-[protein] + ATP = O-(5'-adenylyl)-L-tyrosyl-[protein] + diphosphate. It carries out the reaction L-histidyl-[protein] + UTP = N(tele)-(5'-uridylyl)-L-histidyl-[protein] + diphosphate. The enzyme catalyses L-seryl-[protein] + UTP = O-(5'-uridylyl)-L-seryl-[protein] + diphosphate. The catalysed reaction is L-tyrosyl-[protein] + UTP = O-(5'-uridylyl)-L-tyrosyl-[protein] + diphosphate. Its function is as follows. Nucleotidyltransferase involved in the post-translational modification of proteins. It can catalyze the addition of adenosine monophosphate (AMP) or uridine monophosphate (UMP) to a protein, resulting in modifications known as AMPylation and UMPylation. The chain is Protein nucleotidyltransferase YdiU from Roseobacter denitrificans (strain ATCC 33942 / OCh 114) (Erythrobacter sp. (strain OCh 114)).